The sequence spans 144 residues: Snaclec 6 (144 aa).

Positions 1–23 are cleaved as a signal peptide; the sequence is MGRFISVSFGLLVVFLSLSGTGA. Cystine bridges form between Cys25–Cys36, Cys53–Cys142, and Cys119–Cys134. One can recognise a C-type lectin domain in the interval 32-143; sequence HEGHCYKVFK…CNFIAPVVCK (112 aa).

The protein belongs to the snaclec family. In terms of assembly, heterodimer; disulfide-linked.

It is found in the secreted. In terms of biological role, interferes with one step of hemostasis (modulation of platelet aggregation, or coagulation cascade, for example). The chain is Snaclec 6 from Daboia siamensis (Eastern Russel's viper).